The primary structure comprises 199 residues: Holliday junction branch migration complex subunit RuvA (199 aa).

The interval 1–64 is domain I; the sequence is MIALLTGRLA…EDSISLFGFR (64 aa). A domain II region spans residues 65–143; that stretch reads TLAEKEFFQL…KMDVAPSAQE (79 aa). The segment at 144 to 154 is flexible linker; that stretch reads APSSEAPAEVA. The interval 154–199 is domain III; sequence ADDVASALVNLGYKEAVVRKVLAEMSIEPDASTEAVLRQALKVLMK.

It belongs to the RuvA family. Homotetramer. Forms an RuvA(8)-RuvB(12)-Holliday junction (HJ) complex. HJ DNA is sandwiched between 2 RuvA tetramers; dsDNA enters through RuvA and exits via RuvB. An RuvB hexamer assembles on each DNA strand where it exits the tetramer. Each RuvB hexamer is contacted by two RuvA subunits (via domain III) on 2 adjacent RuvB subunits; this complex drives branch migration. In the full resolvosome a probable DNA-RuvA(4)-RuvB(12)-RuvC(2) complex forms which resolves the HJ.

It is found in the cytoplasm. Its function is as follows. The RuvA-RuvB-RuvC complex processes Holliday junction (HJ) DNA during genetic recombination and DNA repair, while the RuvA-RuvB complex plays an important role in the rescue of blocked DNA replication forks via replication fork reversal (RFR). RuvA specifically binds to HJ cruciform DNA, conferring on it an open structure. The RuvB hexamer acts as an ATP-dependent pump, pulling dsDNA into and through the RuvAB complex. HJ branch migration allows RuvC to scan DNA until it finds its consensus sequence, where it cleaves and resolves the cruciform DNA. The sequence is that of Holliday junction branch migration complex subunit RuvA from Geobacter sulfurreducens (strain ATCC 51573 / DSM 12127 / PCA).